The sequence spans 346 residues: Peroxidase 9 (346 aa).

A signal peptide spans 1 to 23 (MAISKLIPTLVLFVLFSFDVSVA). 4 disulfides stabilise this stretch: cysteine 54–cysteine 134, cysteine 87–cysteine 92, cysteine 140–cysteine 342, and cysteine 219–cysteine 251. The Proton acceptor role is filled by histidine 85. Ca(2+) contacts are provided by aspartate 86, valine 89, glycine 91, aspartate 93, and serine 95. Proline 182 serves as a coordination point for substrate. A glycan (N-linked (GlcNAc...) asparagine) is linked at asparagine 185. Histidine 212 lines the heme b pocket. Threonine 213 is a Ca(2+) binding site. Positions 264, 267, and 272 each coordinate Ca(2+).

This sequence belongs to the peroxidase family. Classical plant (class III) peroxidase subfamily. The cofactor is heme b. Ca(2+) is required as a cofactor.

The protein localises to the secreted. The catalysed reaction is 2 a phenolic donor + H2O2 = 2 a phenolic radical donor + 2 H2O. In terms of biological role, removal of H(2)O(2), oxidation of toxic reductants, biosynthesis and degradation of lignin, suberization, auxin catabolism, response to environmental stresses such as wounding, pathogen attack and oxidative stress. These functions might be dependent on each isozyme/isoform in each plant tissue. The sequence is that of Peroxidase 9 (PER9) from Arabidopsis thaliana (Mouse-ear cress).